A 1364-amino-acid chain; its full sequence is ABC-type transporter cns4 (1364 aa).

An ABC transporter 1 domain is found at 42–290; the sequence is SRVKESRAKP…MEEMGFLYTD (249 aa). N-linked (GlcNAc...) asparagine glycans are attached at residues N152 and N214. 5 helical membrane-spanning segments follow: residues 435-455, 483-503, 508-528, 540-560, and 567-587; these read LFFA…GSFA, IPLI…MTGL, EAFL…TALF, AAIK…GFLI, and PWLG…AVLS. Residue N610 is glycosylated (N-linked (GlcNAc...) asparagine). The chain crosses the membrane as a helical span at residues 650–670; it reads FAIVWVWWALFVILTVYFTSN. 3 N-linked (GlcNAc...) asparagine glycosylation sites follow: N689, N711, and N739. Positions 697-732 are disordered; that stretch reads DEEVGSGPDSHDSRNRSGISPIGDKQETSTDGPSKI. In terms of domain architecture, ABC transporter 2 spans 737 to 985; it reads IRNTSVFTWK…TVNEYFGRNG (249 aa). Residue 779–786 participates in ATP binding; that stretch reads GSSGAGKT. Helical transmembrane passes span 1076–1094, 1105–1125, 1146–1166, 1185–1205, 1211–1231, and 1245–1265; these read LMLH…WKIG, FTIF…QPLF, AFAT…AVVY, AVFF…QAIA, AIFA…FCGV, and WLYY…FTTF.

Belongs to the ABC transporter superfamily. ABCG family. PDR (TC 3.A.1.205) subfamily.

It localises to the cell membrane. Functionally, ABC-type transporter; part of the gene cluster that mediates the biosynthesis of cordycepin (COR) and pentostatin (PTN), two adenosine analogs with related bioactivity profiles as both mimic adenosine and can inhibit some of the processes that are adenosine dependent. Mediates the pumping of pentostatin but not of cordycepin out of fungal cells. Decreasing intracellular pentostatin releases adenosine deaminase (ADA) inhibition, allowing ADA to deaminate cordycepin into non-toxic 3'-d. This is ABC-type transporter cns4 from Cordyceps militaris (strain CM01) (Caterpillar fungus).